The sequence spans 47 residues: High light-inducible protein HliC (47 aa).

Residues 1 to 14 are Cytoplasmic-facing; it reads MNNENSKFGFTAFA. Positions 15–20 match the Chlorophyll-binding motif motif; sequence ENWNGR. The segment at 15 to 36 is a transmembrane helix; the sequence is ENWNGRLAMIGFSSALILELVS. Topologically, residues 37–47 are lumenal, thylakoid; sequence GQGVLHFFGIL.

Belongs to the Hlip family. Forms heterodimers with both HliA and HliB; these are associated with photosystem II (PSII) assembly intermediates containing CP47 (psbB). In the absence of CP47 (psbB) and HliD, forms a homooligomer in vivo that binds 2 chlorophyll a and 1 beta-carotenoid per monomer. Cofractionates in an approximately 50 kDa fraction the thylakoid membrane with HliD. Associated in vivo with monomeric PSII. Purified in several chlorophyll- and carotenoid-containing complexes, including photosystem II (PSII) assembly intermediate complex RCII* (iD1, D1, D2, PsbE, PsbF, PsbI, Ycf39, Ycf48, HliC and HliD) and the Ycf39-Hlip complex (Ycf39, HliC, HliD and pigments).

Its subcellular location is the cellular thylakoid membrane. In terms of biological role, forms a number of heteromers involved in photosystem II (PSII) assembly and/or repair under high light stress. Required for binding of chlorophyll and carotenoids by the Ycf39-Hlip complex. The Ycf39-Hlip complex binds D1 at an early stage of PSII assembly along with Ycf48, ribosomes and ChlG, the last enzyme in chlorophyll biosynthesis; it may be involved in chlorophyll reuse and delivery to D1 in the initial stages of PSII assembly. HliA-HliC and HliB-HliC heterodimers bind chlorophyll and carotenoids in a 1:0.6 ratio. Complexes bind mostly beta-carotenoid, but minor amounts of echinenone and beta-crytoxanthin are also detected. The complexes efficiently quench chlorophyll fluorescence, contributing to photoprotection. Deletion of 4 to 5 members of the Hlip family suggests the proteins are involved in regulation of chlorophyll biosynthesis, in stabilization of chlorophyll-binding proteins and/or in reuse of chlorophylls, and may regulate tetrapyrrole biosynthesis. Might bind chlorophyll and/or carotenoids in association with HliD (called the ScpBE pair). Its function is as follows. The Hlips might regulate tetrapyrrole biosynthesis, maybe at the level of aminolevulinic acid synthesis and probably stabilize PSII assembly intermediates. The sequence is that of High light-inducible protein HliC (hliC) from Synechocystis sp. (strain ATCC 27184 / PCC 6803 / Kazusa).